A 538-amino-acid polypeptide reads, in one-letter code: Syncytin-2 (538 aa).

Residues 1–15 form the signal peptide; the sequence is MGLLLLVLILTPSLA. The Extracellular portion of the chain corresponds to 16-478; the sequence is AYRHPDFPLL…GWLNWEGTWK (463 aa). Positions 43–46 match the CXXC motif; the sequence is CWLC. 3 cysteine pairs are disulfide-bonded: C43-C46, C43-C439, and C431-C438. N-linked (GlcNAc...) asparagine glycans are attached at residues N133, N146, N177, N220, N241, N247, N312, and N332. The interval 354–374 is fusion peptide; the sequence is FIPLLAGLGILAGTGTGIAGI. The CKS-17 signature appears at 414–430; sequence LQNRRGLDMLTAAQGGI. A CX6CC motif is present at residues 431-439; that stretch reads CLALDEKCC. An N-linked (GlcNAc...) asparagine glycan is attached at N443. The chain crosses the membrane as a helical span at residues 479–499; sequence WFSWVLPLTGPLVSLLLLLLF. The Cytoplasmic segment spans residues 500–538; sequence GPCLLNLITQFVSSRLQAIKLQTNLSAGRRPRNIQESPF.

Belongs to the gamma type-C retroviral envelope protein family. HERV class-I FRD env subfamily. The surface and transmembrane proteins form a heterodimer. They are attached by non-covalent interactions or by a labile interchain disulfide bond. Post-translationally, specific enzymatic cleavages in vivo yield the mature SU and TM proteins. The CXXC motif is highly conserved across a broad range of retroviral envelope proteins. It is thought to participate in the formation of a labile disulfide bond possibly with the CX6CC motif present in the transmembrane protein.

The protein resides in the virion. It localises to the cell membrane. In terms of biological role, this endogenous retroviral envelope protein has retained its original fusogenic properties and participates in trophoblast fusion and the formation of a syncytium during placenta morphogenesis. The interaction with MFSD2A is apparently important for this process. Endogenous envelope proteins may have kept, lost or modified their original function during evolution but this one can still make pseudotypes with MLV, HIV-1 or SIV-1 virions and confer infectivity. Retroviral envelope proteins mediate receptor recognition and membrane fusion during early infection. The surface protein mediates receptor recognition, while the transmembrane protein anchors the envelope heterodimer to the viral membrane through one transmembrane domain. The other hydrophobic domain, called fusion peptide, mediates fusion of the viral membrane with the target cell membrane. The protein is Syncytin-2 (ERVFRD-1) of Gorilla gorilla gorilla (Western lowland gorilla).